A 168-amino-acid polypeptide reads, in one-letter code: Photosystem I assembly protein Ycf3 (168 aa).

TPR repeat units lie at residues 35-68 (AFTY…EIDP), 72-105 (SYIL…NPFL), and 120-153 (GEQA…TPGN).

The protein belongs to the Ycf3 family.

It is found in the plastid. The protein resides in the chloroplast thylakoid membrane. Functionally, essential for the assembly of the photosystem I (PSI) complex. May act as a chaperone-like factor to guide the assembly of the PSI subunits. The sequence is that of Photosystem I assembly protein Ycf3 from Acorus calamus var. americanus (American sweet flag).